The sequence spans 271 residues: Phosphate import ATP-binding protein PstB (271 aa).

The ABC transporter domain maps to 24 to 266; the sequence is MIGNDVSVYY…PDDQRTQDYI (243 aa). Residue 56-63 participates in ATP binding; that stretch reads GPSGCGKS.

Belongs to the ABC transporter superfamily. Phosphate importer (TC 3.A.1.7) family. In terms of assembly, the complex is composed of two ATP-binding proteins (PstB), two transmembrane proteins (PstC and PstA) and a solute-binding protein (PstS).

The protein localises to the cell inner membrane. It carries out the reaction phosphate(out) + ATP + H2O = ADP + 2 phosphate(in) + H(+). Its function is as follows. Part of the ABC transporter complex PstSACB involved in phosphate import. Responsible for energy coupling to the transport system. In Rhizobium meliloti (strain 1021) (Ensifer meliloti), this protein is Phosphate import ATP-binding protein PstB.